Here is a 405-residue protein sequence, read N- to C-terminus: NADH-quinone oxidoreductase subunit D (405 aa).

It belongs to the complex I 49 kDa subunit family. NDH-1 is composed of 14 different subunits. Subunits NuoB, C, D, E, F, and G constitute the peripheral sector of the complex.

The protein resides in the cell inner membrane. The catalysed reaction is a quinone + NADH + 5 H(+)(in) = a quinol + NAD(+) + 4 H(+)(out). Its function is as follows. NDH-1 shuttles electrons from NADH, via FMN and iron-sulfur (Fe-S) centers, to quinones in the respiratory chain. The immediate electron acceptor for the enzyme in this species is believed to be ubiquinone. Couples the redox reaction to proton translocation (for every two electrons transferred, four hydrogen ions are translocated across the cytoplasmic membrane), and thus conserves the redox energy in a proton gradient. This is NADH-quinone oxidoreductase subunit D from Ruegeria pomeroyi (strain ATCC 700808 / DSM 15171 / DSS-3) (Silicibacter pomeroyi).